We begin with the raw amino-acid sequence, 240 residues long: Ribonuclease 3 (240 aa).

The RNase III domain occupies Val10 to Gly136. Mg(2+) is bound at residue Glu49. Asp53 is an active-site residue. Mg(2+) contacts are provided by Asp122 and Glu125. Glu125 is a catalytic residue. The 69-residue stretch at Asp163–Ala231 folds into the DRBM domain. Positions Thr205–Ser240 are disordered. Low complexity predominate over residues Gln219–Ala228.

It belongs to the ribonuclease III family. Homodimer. The cofactor is Mg(2+).

Its subcellular location is the cytoplasm. The enzyme catalyses Endonucleolytic cleavage to 5'-phosphomonoester.. In terms of biological role, digests double-stranded RNA. Involved in the processing of primary rRNA transcript to yield the immediate precursors to the large and small rRNAs (23S and 16S). Processes some mRNAs, and tRNAs when they are encoded in the rRNA operon. Processes pre-crRNA and tracrRNA of type II CRISPR loci if present in the organism. This Thermobifida fusca (strain YX) protein is Ribonuclease 3.